The sequence spans 250 residues: Triosephosphate isomerase (250 aa).

Residue N9–K11 coordinates substrate. The Electrophile role is filled by H95. The Proton acceptor role is filled by E167. Substrate contacts are provided by residues G173, S213, and G234–G235.

Belongs to the triosephosphate isomerase family. As to quaternary structure, homodimer.

The protein resides in the cytoplasm. It catalyses the reaction D-glyceraldehyde 3-phosphate = dihydroxyacetone phosphate. Its pathway is carbohydrate biosynthesis; gluconeogenesis. It functions in the pathway carbohydrate degradation; glycolysis; D-glyceraldehyde 3-phosphate from glycerone phosphate: step 1/1. Its function is as follows. Involved in the gluconeogenesis. Catalyzes stereospecifically the conversion of dihydroxyacetone phosphate (DHAP) to D-glyceraldehyde-3-phosphate (G3P). This is Triosephosphate isomerase from Chloroflexus aurantiacus (strain ATCC 29366 / DSM 635 / J-10-fl).